The primary structure comprises 273 residues: Bis(5'-nucleosyl)-tetraphosphatase, symmetrical (273 aa).

It belongs to the Ap4A hydrolase family.

The enzyme catalyses P(1),P(4)-bis(5'-adenosyl) tetraphosphate + H2O = 2 ADP + 2 H(+). Functionally, hydrolyzes diadenosine 5',5'''-P1,P4-tetraphosphate to yield ADP. The polypeptide is Bis(5'-nucleosyl)-tetraphosphatase, symmetrical (Histophilus somni (strain 129Pt) (Haemophilus somnus)).